The chain runs to 538 residues: Bifunctional purine biosynthesis protein PurH (538 aa).

The MGS-like domain maps to 6-158 (KHIPAPDLHR…KNHAYVATVV (153 aa)).

This sequence belongs to the PurH family.

It catalyses the reaction (6R)-10-formyltetrahydrofolate + 5-amino-1-(5-phospho-beta-D-ribosyl)imidazole-4-carboxamide = 5-formamido-1-(5-phospho-D-ribosyl)imidazole-4-carboxamide + (6S)-5,6,7,8-tetrahydrofolate. The catalysed reaction is IMP + H2O = 5-formamido-1-(5-phospho-D-ribosyl)imidazole-4-carboxamide. It participates in purine metabolism; IMP biosynthesis via de novo pathway; 5-formamido-1-(5-phospho-D-ribosyl)imidazole-4-carboxamide from 5-amino-1-(5-phospho-D-ribosyl)imidazole-4-carboxamide (10-formyl THF route): step 1/1. Its pathway is purine metabolism; IMP biosynthesis via de novo pathway; IMP from 5-formamido-1-(5-phospho-D-ribosyl)imidazole-4-carboxamide: step 1/1. The polypeptide is Bifunctional purine biosynthesis protein PurH (Brucella anthropi (strain ATCC 49188 / DSM 6882 / CCUG 24695 / JCM 21032 / LMG 3331 / NBRC 15819 / NCTC 12168 / Alc 37) (Ochrobactrum anthropi)).